The following is a 952-amino-acid chain: Germ layers disorganized gldi-3 (952 aa).

The FHA domain maps to 39 to 100 (KSFGRATTND…NGTYINDRRL (62 aa)). Disordered stretches follow at residues 174 to 220 (IGPR…MPST), 483 to 639 (GTPK…ESTV), and 652 to 866 (AAQS…KERC). Composition is skewed to polar residues over residues 179–195 (PSTT…STNG) and 202–220 (NRAS…MPST). The span at 523–537 (EESEILDVVGTDEPD) shows a compositional bias: acidic residues. Residues 553 to 568 (PEDHGRQTQNKIDKNV) show a composition bias toward basic and acidic residues. Composition is skewed to polar residues over residues 569–584 (RMSS…TPSA) and 600–620 (VTSS…NPVS). Low complexity predominate over residues 662-679 (SVSNTTSSTSASLTTSSV). Residues 685–706 (TSSKENTDQKRAVDDSSDESAR) show a composition bias toward basic and acidic residues. A compositionally biased stretch (low complexity) spans 715-724 (SATPSSTPAE). Residues 725-742 (SSKRKQKDTSSRKMKQLD) are compositionally biased toward basic and acidic residues. The segment covering 761–772 (TKRRDKARRSTR) has biased composition (basic residues). Residues 789–800 (VEDEDETDDVQE) are compositionally biased toward acidic residues. Basic and acidic residues-rich tracts occupy residues 823 to 832 (IKERKTKDKD) and 856 to 866 (PPKTEPSKERC).

It localises to the nucleus. Its function is as follows. Potential transcription factor that may play a role in the regulation of genes involved in cell cycle G1/S transition. May bind to regulatory elements of genes. This Caenorhabditis elegans protein is Germ layers disorganized gldi-3.